We begin with the raw amino-acid sequence, 131 residues long: Peptide methionine sulfoxide reductase MsrB (131 aa).

Residues 8-130 enclose the MsrB domain; that stretch reads DAEWRAQLTD…NSVCLDLKRS (123 aa). Cys47, Cys50, Cys96, and Cys99 together coordinate Zn(2+). Cys119 acts as the Nucleophile in catalysis.

Belongs to the MsrB Met sulfoxide reductase family. Requires Zn(2+) as cofactor.

It carries out the reaction L-methionyl-[protein] + [thioredoxin]-disulfide + H2O = L-methionyl-(R)-S-oxide-[protein] + [thioredoxin]-dithiol. The protein is Peptide methionine sulfoxide reductase MsrB of Alkalilimnicola ehrlichii (strain ATCC BAA-1101 / DSM 17681 / MLHE-1).